The sequence spans 56 residues: uncharacterized protein (56 aa).

The helical transmembrane segment at 2–22 threads the bilayer; that stretch reads ILYIIVAISILLNIILGIKVI.

It is found in the membrane. This is an uncharacterized protein from Methanocaldococcus jannaschii (strain ATCC 43067 / DSM 2661 / JAL-1 / JCM 10045 / NBRC 100440) (Methanococcus jannaschii).